Reading from the N-terminus, the 502-residue chain is Glycerol kinase (502 aa).

Threonine 14 serves as a coordination point for ADP. ATP is bound by residues threonine 14, threonine 15, and serine 16. Threonine 14 is a binding site for sn-glycerol 3-phosphate. Arginine 18 is a binding site for ADP. 4 residues coordinate sn-glycerol 3-phosphate: arginine 84, glutamate 85, tyrosine 136, and aspartate 246. Residues arginine 84, glutamate 85, tyrosine 136, aspartate 246, and glutamine 247 each contribute to the glycerol site. ADP is bound by residues threonine 268 and glycine 311. ATP contacts are provided by threonine 268, glycine 311, glutamine 315, and glycine 412. Glycine 412 and asparagine 416 together coordinate ADP.

The protein belongs to the FGGY kinase family. In terms of assembly, homotetramer and homodimer (in equilibrium). Heterodimer with EIIA-Glc. Binds 1 zinc ion per glycerol kinase EIIA-Glc dimer. The zinc ion is important for dimerization.

The catalysed reaction is glycerol + ATP = sn-glycerol 3-phosphate + ADP + H(+). The protein operates within polyol metabolism; glycerol degradation via glycerol kinase pathway; sn-glycerol 3-phosphate from glycerol: step 1/1. With respect to regulation, activity of this regulatory enzyme is affected by several metabolites. Allosterically and non-competitively inhibited by fructose 1,6-bisphosphate (FBP) and unphosphorylated phosphocarrier protein EIIA-Glc (III-Glc), an integral component of the bacterial phosphotransferase (PTS) system. Its function is as follows. Key enzyme in the regulation of glycerol uptake and metabolism. Catalyzes the phosphorylation of glycerol to yield sn-glycerol 3-phosphate. The protein is Glycerol kinase of Shigella boydii serotype 18 (strain CDC 3083-94 / BS512).